The sequence spans 464 residues: Cysteine--tRNA ligase (464 aa).

C29 contacts Zn(2+). The 'HIGH' region signature appears at 31–41 (ATVQGDPHIGH). Residues C207, H232, and E236 each coordinate Zn(2+). The short motif at 263–267 (KMSKS) is the 'KMSKS' region element. K266 is a binding site for ATP.

This sequence belongs to the class-I aminoacyl-tRNA synthetase family. Monomer. Zn(2+) serves as cofactor.

The protein resides in the cytoplasm. It catalyses the reaction tRNA(Cys) + L-cysteine + ATP = L-cysteinyl-tRNA(Cys) + AMP + diphosphate. This Rhodococcus jostii (strain RHA1) protein is Cysteine--tRNA ligase.